The following is a 318-amino-acid chain: Malate dehydrogenase (318 aa).

NAD(+) contacts are provided by residues 10–15 and aspartate 34; that span reads GGGQIG. 2 residues coordinate substrate: arginine 83 and arginine 89. NAD(+)-binding positions include asparagine 96 and 119–121; that span reads LSN. Residues asparagine 121 and arginine 152 each coordinate substrate. Catalysis depends on histidine 176, which acts as the Proton acceptor.

It belongs to the LDH/MDH superfamily. MDH type 3 family.

It carries out the reaction (S)-malate + NAD(+) = oxaloacetate + NADH + H(+). Functionally, catalyzes the reversible oxidation of malate to oxaloacetate. In Syntrophotalea carbinolica (strain DSM 2380 / NBRC 103641 / GraBd1) (Pelobacter carbinolicus), this protein is Malate dehydrogenase.